A 335-amino-acid chain; its full sequence is Capsular polysaccharide phosphotransferase WcwK (335 aa).

Belongs to the stealth family.

The chain is Capsular polysaccharide phosphotransferase WcwK (wcwK) from Streptococcus pneumoniae.